The sequence spans 260 residues: Uroplakin-1b (260 aa).

Residues 2–15 (AKDDSTVRCFQGLL) lie on the Cytoplasmic side of the membrane. The chain crosses the membrane as a helical span at residues 16-36 (IFGNVIIGMCSIALMAECIFF). The Extracellular portion of the chain corresponds to 37-60 (VSDQNSLYPLLEATNNDDIYAAAW). A helical transmembrane segment spans residues 61 to 81 (IGMFVGICLFCLSVLGIVGIM). Residues 82–86 (KSNRK) lie on the Cytoplasmic side of the membrane. A helical membrane pass occupies residues 87 to 107 (ILLVYFILMFIVYAFEVASCI). Residues 108 to 229 (TAATQRDFFT…ELISGPMNRH (122 aa)) are Extracellular-facing. The chain crosses the membrane as a helical span at residues 230-250 (AWGVAWFGFAILCWTFWVLLG). At 251-260 (TMFYWSRIDY) the chain is on the cytoplasmic side.

It belongs to the tetraspanin (TM4SF) family. As to quaternary structure, heterodimer with uroplakin-3A (UPK3A) or uroplakin-3B (UPK3B). In terms of processing, N-glycosylated with high-mannose oligosaccharides. Bladder epithelium.

Its subcellular location is the membrane. Functionally, component of the asymmetric unit membrane (AUM); a highly specialized biomembrane elaborated by terminally differentiated urothelial cells. May play an important role in normal bladder epithelial physiology, possibly in regulating membrane permeability of superficial umbrella cells or in stabilizing the apical membrane through AUM/cytoskeletal interactions. The sequence is that of Uroplakin-1b (UPK1B) from Bos taurus (Bovine).